A 136-amino-acid chain; its full sequence is MLFSLRELVQWLGFATFEIFVHLLALLVFSVLLALRVDGLVPGLSWWNVFVPFFAADGLSTYFTTIVSVRLFQDGEKRLAVLRLFWVLTVLSLKFVFEMLLCQKLAEQTRELWFGLITSPLFILLQLLMIRACRVN.

An interaction with STING1 region spans residues 1–51; sequence MLFSLRELVQWLGFATFEIFVHLLALLVFSVLLALRVDGLVPGLSWWNVFV. Helical transmembrane passes span 14–34, 50–72, 81–101, and 112–132; these read FATFEIFVHLLALLVFSVLLA, FVPFFAADGLSTYFTTIVSVRLF, VLRLFWVLTVLSLKFVFEMLL, and LWFGLITSPLFILLQLLMIRA. The tract at residues 52-136 is required for the lysosomal localization of the STING-TMEM203 complex; it reads PFFAADGLST…LLMIRACRVN (85 aa).

In terms of assembly, homodimer. Interacts with ATP2A2, ITPR3 and STIM1. Interacts with STING1 (via transmembrane domain). Increased expression seen in T-lymphocytes from patients with systemic lupus erythematosus (SLE).

It is found in the endoplasmic reticulum membrane. It localises to the endoplasmic reticulum-Golgi intermediate compartment. The protein resides in the lysosome membrane. Its function is as follows. Involved in the regulation of cellular calcium homeotasis. Required for spermatogenesis. Acts as a regulator of STING-mediated inflammatory signaling in macrophages. Forms a complex with STING, promoting the activity of TBK1 kinase and the transcription factor IRF3, leading to activation of type I interferon expression. This chain is Transmembrane protein 203 (TMEM203), found in Homo sapiens (Human).